A 506-amino-acid polypeptide reads, in one-letter code: L-amino-acid oxidase (506 aa).

The first 18 residues, 1–18 (MNVFFTFSLLFLAALGSC), serve as a signal peptide directing secretion. An intrachain disulfide couples Cys-28 to Cys-191. Residue Glu-36 participates in Zn(2+) binding. FAD-binding positions include 61 to 62 (MS), Ser-62, 81 to 82 (EA), Arg-89, and 105 to 108 (GPMR). Substrate is bound at residue Arg-108. Zn(2+) is bound by residues Glu-111, Glu-118, and Glu-150. A glycan (N-linked (GlcNAc...) asparagine) is linked at Asn-190. Residue Asp-219 coordinates Zn(2+). Residue His-241 participates in substrate binding. A Zn(2+)-binding site is contributed by Glu-248. FAD is bound at residue Val-279. Glu-299 and His-332 together coordinate Zn(2+). Cys-349 and Cys-430 are disulfide-bonded. Tyr-390 contacts substrate. Residue His-458 participates in Zn(2+) binding. FAD contacts are provided by residues Glu-475 and 482 to 487 (GWIDST). Position 482-483 (482-483 (GW)) interacts with substrate.

Belongs to the flavin monoamine oxidase family. FIG1 subfamily. In terms of assembly, homodimer; non-covalently linked. Stabilized by a single zinc-binding site located at the dimer interface (Asp-219, His-332 and His-458). Other zinc-bind sites can be understood as transient and non-specific, and appear due to the high concentration of zinc ions used in the crystallization experiments. Requires FAD as cofactor. As to expression, expressed by the venom gland.

It is found in the secreted. It catalyses the reaction an L-alpha-amino acid + O2 + H2O = a 2-oxocarboxylate + H2O2 + NH4(+). It carries out the reaction L-leucine + O2 + H2O = 4-methyl-2-oxopentanoate + H2O2 + NH4(+). The enzyme catalyses L-phenylalanine + O2 + H2O = 3-phenylpyruvate + H2O2 + NH4(+). The catalysed reaction is L-tryptophan + O2 + H2O = indole-3-pyruvate + H2O2 + NH4(+). It catalyses the reaction L-methionine + O2 + H2O = 4-methylsulfanyl-2-oxobutanoate + H2O2 + NH4(+). It carries out the reaction L-isoleucine + O2 + H2O = (S)-3-methyl-2-oxopentanoate + H2O2 + NH4(+). The enzyme catalyses L-tyrosine + O2 + H2O = 3-(4-hydroxyphenyl)pyruvate + H2O2 + NH4(+). In terms of biological role, catalyzes an oxidative deamination of predominantly hydrophobic and aromatic L-amino acids, thus producing hydrogen peroxide that may contribute to the diverse toxic effects of this enzyme. Shows high catalytic activity against L-Met, L-Leu, L-Phe, L-Trp, L-Tyr, L-Ile. Shows no or weak activity on L-Cys, L-Val, L-Gln, L-Thr, L-Ser, L-Lys, L-Arg, L-Asn, L-Glu, L-Gly, L-Pro, L-Asp and L-His. Induces platelet aggregation in platelet-rich plasma, probably due to hydrogen peroxide production, since catalase inhibits aggregation effect. Induces moderate mouse paw edema. Induces apoptosis and shows cytotoxicity against several cancer cell lines, which is inhibited by catalase. Shows hemolytic activity and antibacterial activities against both Gram-positive and Gram-negative bacteria. Has parasiticidal activities against both trypanosomes and leishmania, as a result of enzyme-catalyzed hydrogen peroxide production. Unlike other snake venom L-amino acid oxidases, does not induce hemorrhage (with 50 ug of enzyme). The polypeptide is L-amino-acid oxidase (Bothrops atrox (Barba amarilla)).